Here is a 48-residue protein sequence, read N- to C-terminus: uncharacterized protein (48 aa).

This is an uncharacterized protein from Saccharomyces cerevisiae (strain ATCC 204508 / S288c) (Baker's yeast).